The chain runs to 191 residues: Elongation factor P 1 (191 aa).

The protein belongs to the elongation factor P family.

The protein localises to the cytoplasm. It participates in protein biosynthesis; polypeptide chain elongation. Functionally, involved in peptide bond synthesis. Stimulates efficient translation and peptide-bond synthesis on native or reconstituted 70S ribosomes in vitro. Probably functions indirectly by altering the affinity of the ribosome for aminoacyl-tRNA, thus increasing their reactivity as acceptors for peptidyl transferase. This Lactobacillus acidophilus (strain ATCC 700396 / NCK56 / N2 / NCFM) protein is Elongation factor P 1.